The primary structure comprises 432 residues: 3-phosphoshikimate 1-carboxyvinyltransferase (432 aa).

3-phosphoshikimate contacts are provided by lysine 22, serine 23, and arginine 27. Position 22 (lysine 22) interacts with phosphoenolpyruvate. 2 residues coordinate phosphoenolpyruvate: glycine 96 and arginine 127. 3-phosphoshikimate contacts are provided by serine 173, serine 174, glutamine 175, serine 201, aspartate 316, asparagine 339, and lysine 343. Glutamine 175 lines the phosphoenolpyruvate pocket. The active-site Proton acceptor is aspartate 316. The phosphoenolpyruvate site is built by arginine 347, arginine 391, and lysine 416.

This sequence belongs to the EPSP synthase family. As to quaternary structure, monomer.

It is found in the cytoplasm. It carries out the reaction 3-phosphoshikimate + phosphoenolpyruvate = 5-O-(1-carboxyvinyl)-3-phosphoshikimate + phosphate. The protein operates within metabolic intermediate biosynthesis; chorismate biosynthesis; chorismate from D-erythrose 4-phosphate and phosphoenolpyruvate: step 6/7. Catalyzes the transfer of the enolpyruvyl moiety of phosphoenolpyruvate (PEP) to the 5-hydroxyl of shikimate-3-phosphate (S3P) to produce enolpyruvyl shikimate-3-phosphate and inorganic phosphate. The protein is 3-phosphoshikimate 1-carboxyvinyltransferase of Haemophilus influenzae (strain ATCC 51907 / DSM 11121 / KW20 / Rd).